A 26-amino-acid polypeptide reads, in one-letter code: Turripeptide OL49 (26 aa).

In terms of processing, contains 3 disulfide bonds. Expressed by the venom duct.

It localises to the secreted. In terms of biological role, acts as a neurotoxin by inhibiting an ion channel. This chain is Turripeptide OL49, found in Iotyrris olangoensis (Sea snail).